Reading from the N-terminus, the 429-residue chain is Histidine--tRNA ligase (429 aa).

This sequence belongs to the class-II aminoacyl-tRNA synthetase family. Homodimer.

It is found in the cytoplasm. It carries out the reaction tRNA(His) + L-histidine + ATP = L-histidyl-tRNA(His) + AMP + diphosphate + H(+). The polypeptide is Histidine--tRNA ligase (Stutzerimonas stutzeri (strain A1501) (Pseudomonas stutzeri)).